The following is a 1504-amino-acid chain: Nischarin (1504 aa).

N-acetylalanine is present on Ala2. A necessary for binding to phosphoinositide-3-P; not sufficient for targeting to endosomes region spans residues 2–133; that stretch reads ATARTFGPER…GITAALAEEL (132 aa). In terms of domain architecture, PX spans 11-121; sequence REAEPAKEAR…AHFLHFHFYE (111 aa). The tract at residues 120–695 is necessary for homooligomerization and targeting to endosomes; it reads YEINGITAAL…ERLALEWALG (576 aa). The interaction with PAK1 stretch occupies residues 245-869; that stretch reads LSVRFSATSM…LVYSDKRMVQ (625 aa). 6 LRR repeats span residues 288-309, 311-332, 333-354, 356-377, 378-399, and 403-424; these read ALTTLDLSHNSVSEIDESVKLI, KIEFLDLSHNGLLVVDNLQHLY, NLVHLDLSYNKLSSLEGLHTKL, NIKTLNLAGNLLESLSGLHKLY, SLVNLDLRDNRIEQMEEVRSIG, and CLEHVSLLNNPLSIIPDYRTKV. Positions 463-478 are enriched in basic and acidic residues; sequence KSKLSNPEKKGGEDSR. 4 disordered regions span residues 463–501, 524–547, 554–573, and 628–687; these read KSKLSNPEKKGGEDSRLSAAPCIRPSSSPPTVAPASASL, SSTDSLTPEHQPIAQGCSDSLESI, SDDLRDVPGAVGGASPEHAE, and REEG…EEER. Phosphoserine is present on residues Ser541, Ser543, and Ser546. The stretch at 634 to 695 forms a coiled coil; it reads EQGEEEDEEE…ERLALEWALG (62 aa). Acidic residues-rich tracts occupy residues 635–649 and 661–685; these read QGEEEDEEEEEEEDV and DVEEEEGGGQGEEEEEEEEDEEAEE. The tract at residues 660–869 is interaction with LIMK; sequence PDVEEEEGGG…LVYSDKRMVQ (210 aa). An interaction with ITGA5 region spans residues 709-807; it reads KVLWCFLIHV…ANLHEFHADL (99 aa). Positions 1016-1104 are disordered; it reads TPGTGGSPQG…PAPPPAEAPA (89 aa). The residue at position 1022 (Ser1022) is a Phosphoserine. Basic and acidic residues predominate over residues 1032–1043; that stretch reads PAERRASNDQRP. Positions 1063–1078 are enriched in low complexity; it reads PAAASASGPAKTPAPA. Thr1282 bears the Phosphothreonine mark. A Phosphoserine modification is found at Ser1284.

In terms of assembly, homooligomer. Interacts with GRB2. Interacts with PIK3R1; probably associates with the PI3-kinase complex. Interacts with IRS4. Found in a complex with ITGA5 and PAK1. Found in a complex with LIMK1 and PAK1. Interacts with ITGA5 (via cytoplasmic domain); this interaction is direct. Interacts with PAK1 (via kinase domain); this interaction is direct and is increased upon activation of PAK1. Interacts with LIMK1 (via PDZ and kinase domain); this interaction is direct. Interacts with LIMK2; this interaction depends on LIMK2 activity. Interacts with RAC1 (activated state). Interacts with STK11; this interaction may increase STK11 activity. In terms of tissue distribution, isoform 1, isoform 3 and isoform 4 are expressed in brain. Isoform 1 is expressed in endocrine tissues.

It is found in the cell membrane. Its subcellular location is the cytoplasm. The protein resides in the early endosome. It localises to the recycling endosome. Its function is as follows. Acts either as the functional imidazoline-1 receptor (I1R) candidate or as a membrane-associated mediator of the I1R signaling. Binds numerous imidazoline ligands that induces initiation of cell-signaling cascades triggering to cell survival, growth and migration. Its activation by the agonist rilmenidine induces an increase in phosphorylation of mitogen-activated protein kinases MAPK1 and MAPK3 in rostral ventrolateral medulla (RVLM) neurons that exhibited rilmenidine-evoked hypotension. Blocking its activation with efaroxan abolished rilmenidine-induced mitogen-activated protein kinase phosphorylation in RVLM neurons. Acts as a modulator of Rac-regulated signal transduction pathways. Suppresses Rac1-stimulated cell migration by interacting with PAK1 and inhibiting its kinase activity. Also blocks Pak-independent Rac signaling by interacting with RAC1 and inhibiting Rac1-stimulated NF-kB response element and cyclin D1 promoter activation. Also inhibits LIMK1 kinase activity by reducing LIMK1 'Tyr-508' phosphorylation. Inhibits Rac-induced cell migration and invasion in breast and colon epithelial cells. Inhibits lamellipodia formation, when overexpressed. Plays a role in protection against apoptosis. Involved in association with IRS4 in the enhancement of insulin activation of MAPK1 and MAPK3. When overexpressed, induces a redistribution of cell surface ITGA5 integrin to intracellular endosomal structures. This Homo sapiens (Human) protein is Nischarin (NISCH).